Consider the following 355-residue polypeptide: Peptide chain release factor 1 (355 aa).

The residue at position 231 (Gln-231) is an N5-methylglutamine. Over residues 283–292 (IAKETSERKS) the composition is skewed to basic and acidic residues. The segment at 283-303 (IAKETSERKSQVGTGDRSGRI) is disordered.

This sequence belongs to the prokaryotic/mitochondrial release factor family. In terms of processing, methylated by PrmC. Methylation increases the termination efficiency of RF1.

It is found in the cytoplasm. Its function is as follows. Peptide chain release factor 1 directs the termination of translation in response to the peptide chain termination codons UAG and UAA. The sequence is that of Peptide chain release factor 1 from Campylobacter curvus (strain 525.92).